Reading from the N-terminus, the 383-residue chain is Lipid-A-disaccharide synthase (383 aa).

Belongs to the LpxB family.

It carries out the reaction a lipid X + a UDP-2-N,3-O-bis[(3R)-3-hydroxyacyl]-alpha-D-glucosamine = a lipid A disaccharide + UDP + H(+). It functions in the pathway bacterial outer membrane biogenesis; LPS lipid A biosynthesis. Its function is as follows. Condensation of UDP-2,3-diacylglucosamine and 2,3-diacylglucosamine-1-phosphate to form lipid A disaccharide, a precursor of lipid A, a phosphorylated glycolipid that anchors the lipopolysaccharide to the outer membrane of the cell. This is Lipid-A-disaccharide synthase from Aliivibrio fischeri (strain MJ11) (Vibrio fischeri).